The primary structure comprises 180 residues: CASP-like protein 2A3 (180 aa).

Topologically, residues 1 to 13 (MELIYGSTMRKKW) are cytoplasmic. The helical transmembrane segment at 14–34 (IEPALRFLPVGLCISALALML) threads the bilayer. Residues 35–55 (KSKEGNENGILEYKHVGAFRY) lie on the Extracellular side of the membrane. The chain crosses the membrane as a helical span at residues 56 to 76 (LAYANGICAAYSVLSTFNSVV). Topologically, residues 77 to 85 (PRSCSLSRA) are cytoplasmic. The helical transmembrane segment at 86–106 (WFVFVFDQAFTYLMLGAGAVV) threads the bilayer. The Extracellular portion of the chain corresponds to 107–135 (TEVLYLAYKGDEKITWFEICPYYGRFCNR). The helical transmembrane segment at 136-156 (VAASLVISFLALLCFIPLSLI) threads the bilayer. The Cytoplasmic segment spans residues 157-180 (SAYRVFSKYDPPSLCKKDQITSQS).

The protein belongs to the Casparian strip membrane proteins (CASP) family. Homodimer and heterodimers.

It is found in the cell membrane. The polypeptide is CASP-like protein 2A3 (Picea sitchensis (Sitka spruce)).